A 440-amino-acid polypeptide reads, in one-letter code: Proline--tRNA ligase (440 aa).

The protein belongs to the class-II aminoacyl-tRNA synthetase family. ProS type 2 subfamily. In terms of assembly, homodimer.

Its subcellular location is the cytoplasm. It catalyses the reaction tRNA(Pro) + L-proline + ATP = L-prolyl-tRNA(Pro) + AMP + diphosphate. Its function is as follows. Catalyzes the attachment of proline to tRNA(Pro) in a two-step reaction: proline is first activated by ATP to form Pro-AMP and then transferred to the acceptor end of tRNA(Pro). The chain is Proline--tRNA ligase from Agrobacterium fabrum (strain C58 / ATCC 33970) (Agrobacterium tumefaciens (strain C58)).